Consider the following 169-residue polypeptide: Small ribosomal subunit protein uS5 (169 aa).

Residues 15 to 79 (LKEQVVAINR…EAAKKNLRRI (65 aa)) enclose the S5 DRBM domain.

It belongs to the universal ribosomal protein uS5 family. Part of the 30S ribosomal subunit. Contacts proteins S4 and S8.

In terms of biological role, with S4 and S12 plays an important role in translational accuracy. Located at the back of the 30S subunit body where it stabilizes the conformation of the head with respect to the body. This chain is Small ribosomal subunit protein uS5, found in Solibacter usitatus (strain Ellin6076).